The chain runs to 527 residues: Probable bifunctional tRNA threonylcarbamoyladenosine biosynthesis protein (527 aa).

Positions 1 to 323 (MPDIMPDDGL…YRADEVEVAW (323 aa)) are kae1. The Fe cation site is built by His110, His114, and Tyr131. L-threonylcarbamoyladenylate is bound by residues 131–135 (YASGA), Asp163, Gly176, Glu180, and Asn256. A Fe cation-binding site is contributed by Asp284. The Protein kinase domain occupies 333-527 (IGPHEGGVAR…HEVELRGRYL (195 aa)). Residues 340-348 (VARGAEAVV) and Lys357 contribute to the ATP site. Asp444 serves as the catalytic Proton acceptor; for kinase activity.

In the N-terminal section; belongs to the KAE1 / TsaD family. It in the C-terminal section; belongs to the protein kinase superfamily. Tyr protein kinase family. BUD32 subfamily. As to quaternary structure, component of the KEOPS complex that consists of Kae1, Bud32, Cgi121 and Pcc1; the whole complex dimerizes. The cofactor is Fe(2+).

It localises to the cytoplasm. It catalyses the reaction L-seryl-[protein] + ATP = O-phospho-L-seryl-[protein] + ADP + H(+). It carries out the reaction L-threonyl-[protein] + ATP = O-phospho-L-threonyl-[protein] + ADP + H(+). The catalysed reaction is L-threonylcarbamoyladenylate + adenosine(37) in tRNA = N(6)-L-threonylcarbamoyladenosine(37) in tRNA + AMP + H(+). Functionally, required for the formation of a threonylcarbamoyl group on adenosine at position 37 (t(6)A37) in tRNAs that read codons beginning with adenine. Is a component of the KEOPS complex that is probably involved in the transfer of the threonylcarbamoyl moiety of threonylcarbamoyl-AMP (TC-AMP) to the N6 group of A37. The Kae1 domain likely plays a direct catalytic role in this reaction. The Bud32 domain probably displays kinase activity that regulates Kae1 function. This is Probable bifunctional tRNA threonylcarbamoyladenosine biosynthesis protein from Methanoculleus marisnigri (strain ATCC 35101 / DSM 1498 / JR1).